The sequence spans 84 residues: Beta-cardiotoxin CTX23 (84 aa).

Residues 1-21 (MKTLLLTLVVVTIVCLDLGYT) form the signal peptide. 4 disulfides stabilise this stretch: cysteine 24/cysteine 43, cysteine 36/cysteine 61, cysteine 65/cysteine 76, and cysteine 77/cysteine 82.

Belongs to the three-finger toxin family. Short-chain subfamily. Aminergic toxin sub-subfamily. Expressed by the venom gland.

The protein localises to the secreted. Its function is as follows. Acts as a beta-blocker by binding to beta-1 and beta-2 adrenergic receptors (ADRB1 and ADRB2). It dose-dependently decreases the heart rate (bradycardia), whereas conventional cardiotoxins increases it. At 100 mg/kg, intraperitoneal injection into mice provokes labored breathing, impaired locomotion, lack of response to external stimuli, and death (after 30 minutes). This Ophiophagus hannah (King cobra) protein is Beta-cardiotoxin CTX23.